A 566-amino-acid polypeptide reads, in one-letter code: Glutamate--tRNA ligase (566 aa).

Positions 93–103 (PNPDYTIHLGN) match the 'HIGH' region motif.

It belongs to the class-I aminoacyl-tRNA synthetase family. Glutamate--tRNA ligase type 2 subfamily.

It is found in the cytoplasm. It catalyses the reaction tRNA(Glu) + L-glutamate + ATP = L-glutamyl-tRNA(Glu) + AMP + diphosphate. Functionally, catalyzes the attachment of glutamate to tRNA(Glu) in a two-step reaction: glutamate is first activated by ATP to form Glu-AMP and then transferred to the acceptor end of tRNA(Glu). The protein is Glutamate--tRNA ligase of Staphylothermus marinus (strain ATCC 43588 / DSM 3639 / JCM 9404 / F1).